The primary structure comprises 252 residues: tRNA (guanine-N(1)-)-methyltransferase (252 aa).

S-adenosyl-L-methionine-binding positions include Gly-118 and 138 to 143 (IGDYVL).

Belongs to the RNA methyltransferase TrmD family. Homodimer.

Its subcellular location is the cytoplasm. It catalyses the reaction guanosine(37) in tRNA + S-adenosyl-L-methionine = N(1)-methylguanosine(37) in tRNA + S-adenosyl-L-homocysteine + H(+). Functionally, specifically methylates guanosine-37 in various tRNAs. The chain is tRNA (guanine-N(1)-)-methyltransferase from Pseudomonas aeruginosa (strain UCBPP-PA14).